The following is a 275-amino-acid chain: 3-methyl-2-oxobutanoate hydroxymethyltransferase (275 aa).

Asp44 and Asp83 together coordinate Mg(2+). Residues Asp44 to Ser45, Asp83, and Lys113 contribute to the 3-methyl-2-oxobutanoate site. Position 115 (Glu115) interacts with Mg(2+). The active-site Proton acceptor is the Glu182.

The protein belongs to the PanB family. As to quaternary structure, homodecamer; pentamer of dimers. Mg(2+) is required as a cofactor.

Its subcellular location is the cytoplasm. The enzyme catalyses 3-methyl-2-oxobutanoate + (6R)-5,10-methylene-5,6,7,8-tetrahydrofolate + H2O = 2-dehydropantoate + (6S)-5,6,7,8-tetrahydrofolate. The protein operates within cofactor biosynthesis; (R)-pantothenate biosynthesis; (R)-pantoate from 3-methyl-2-oxobutanoate: step 1/2. Its function is as follows. Catalyzes the reversible reaction in which hydroxymethyl group from 5,10-methylenetetrahydrofolate is transferred onto alpha-ketoisovalerate to form ketopantoate. The sequence is that of 3-methyl-2-oxobutanoate hydroxymethyltransferase from Clostridium botulinum (strain Alaska E43 / Type E3).